The primary structure comprises 734 residues: Photosystem I P700 chlorophyll a apoprotein A2 (734 aa).

8 helical membrane passes run 46-69 (IFAS…FHVA), 135-158 (LYTG…LHLQ), 175-199 (LNHH…HVAI), 273-291 (IAHH…GHMY), 330-353 (IHFQ…QHMY), 369-395 (AALY…IFFI), 417-439 (AIIS…LYVH), and 517-535 (FLVH…LILV). Residues Cys-559 and Cys-568 each contribute to the [4Fe-4S] cluster site. A run of 2 helical transmembrane segments spans residues 575–596 (AFYL…YWHW) and 643–665 (LSVW…MFLI). Residues His-654, Met-662, and Tyr-670 each coordinate chlorophyll a. Residue Trp-671 participates in phylloquinone binding. A helical transmembrane segment spans residues 707–727 (LVGLAHFSVGYIFTYAAFLIA).

Belongs to the PsaA/PsaB family. In terms of assembly, the PsaA/B heterodimer binds the P700 chlorophyll special pair and subsequent electron acceptors. PSI consists of a core antenna complex that captures photons, and an electron transfer chain that converts photonic excitation into a charge separation. The eukaryotic PSI reaction center is composed of at least 11 subunits. P700 is a chlorophyll a/chlorophyll a' dimer, A0 is one or more chlorophyll a, A1 is one or both phylloquinones and FX is a shared 4Fe-4S iron-sulfur center. serves as cofactor.

It is found in the plastid. Its subcellular location is the chloroplast thylakoid membrane. The enzyme catalyses reduced [plastocyanin] + hnu + oxidized [2Fe-2S]-[ferredoxin] = oxidized [plastocyanin] + reduced [2Fe-2S]-[ferredoxin]. Functionally, psaA and PsaB bind P700, the primary electron donor of photosystem I (PSI), as well as the electron acceptors A0, A1 and FX. PSI is a plastocyanin-ferredoxin oxidoreductase, converting photonic excitation into a charge separation, which transfers an electron from the donor P700 chlorophyll pair to the spectroscopically characterized acceptors A0, A1, FX, FA and FB in turn. Oxidized P700 is reduced on the lumenal side of the thylakoid membrane by plastocyanin. This chain is Photosystem I P700 chlorophyll a apoprotein A2, found in Saccharum hybrid (Sugarcane).